The sequence spans 557 residues: Formate--tetrahydrofolate ligase 2 (557 aa).

66 to 73 (TPAGEGKT) provides a ligand contact to ATP.

This sequence belongs to the formate--tetrahydrofolate ligase family.

It catalyses the reaction (6S)-5,6,7,8-tetrahydrofolate + formate + ATP = (6R)-10-formyltetrahydrofolate + ADP + phosphate. The protein operates within one-carbon metabolism; tetrahydrofolate interconversion. This is Formate--tetrahydrofolate ligase 2 from Streptococcus pyogenes serotype M6 (strain ATCC BAA-946 / MGAS10394).